Here is a 155-residue protein sequence, read N- to C-terminus: Transcriptional regulator MraZ (155 aa).

SpoVT-AbrB domains are found at residues 15–62 and 93–136; these read TYEN…GMDR and SEEL…NPTA.

The protein belongs to the MraZ family. Forms oligomers.

It is found in the cytoplasm. It localises to the nucleoid. The protein is Transcriptional regulator MraZ of Rhodospirillum rubrum (strain ATCC 11170 / ATH 1.1.1 / DSM 467 / LMG 4362 / NCIMB 8255 / S1).